Here is a 311-residue protein sequence, read N- to C-terminus: Probable acetylxylan esterase A (311 aa).

Positions 1 to 19 (MAPFSFILTVLLYALTCSA) are cleaved as a signal peptide. The Charge relay system role is filled by Ser153. Residues Asn197 and Asn224 are each glycosylated (N-linked (GlcNAc...) asparagine).

It belongs to the carbohydrate esterase 1 (CE1) family. AxeA subfamily. Monomer.

Its subcellular location is the secreted. The enzyme catalyses Deacetylation of xylans and xylo-oligosaccharides.. The protein operates within glycan degradation; xylan degradation. Functionally, acetylxylan esterase involved in the hydrolysis of xylan, a major structural heterogeneous polysaccharide found in plant biomass representing the second most abundant polysaccharide in the biosphere, after cellulose. Degrades acetylated xylans by cleaving acetyl side groups from the hetero-xylan backbone. This Aspergillus terreus (strain NIH 2624 / FGSC A1156) protein is Probable acetylxylan esterase A (axeA).